We begin with the raw amino-acid sequence, 462 residues long: Sensor histidine kinase RegB (462 aa).

Topologically, residues 1-25 are cytoplasmic; it reads MILGPDGILNRDTRGDWVRLRTLIL. A helical transmembrane segment spans residues 26–45; sequence LRWMAVAGQLAAIVVTDWYL. The Extracellular segment spans residues 46-51; sequence GVRLPM. The chain crosses the membrane as a helical span at residues 52 to 70; the sequence is GLCFMAVGASVIANVIATF. Topologically, residues 71–78 are cytoplasmic; the sequence is VFPQNRRL. A helical membrane pass occupies residues 79–96; the sequence is TEFQALMILLFDLTQLSF. Residues 97–103 are Extracellular-facing; that stretch reads LLFLTGG. A helical transmembrane segment spans residues 104–123; sequence LTNPFALLILAPVTISALAL. Over 124–129 the chain is Cytoplasmic; sequence ELRTTV. A helical membrane pass occupies residues 130–149; that stretch reads ILGAIAIGLLTFTAYFHLPL. At 150–164 the chain is on the extracellular side; the sequence is ILADGSSLSVPRMFE. The chain crosses the membrane as a helical span at residues 165–182; it reads FGFWLAIVIGILFLGLYS. At 183–462 the chain is on the cytoplasmic side; sequence RRVAIEIRSM…PLGENVLIQT (280 aa). The Histidine kinase domain maps to 218 to 445; it reads AAAHELGTPL…IVEVIWPVDR (228 aa). H221 bears the Phosphohistidine; by autocatalysis mark.

Its subcellular location is the cell inner membrane. It catalyses the reaction ATP + protein L-histidine = ADP + protein N-phospho-L-histidine.. In terms of biological role, member of the two-component regulatory system RegB/RegA. Involved in the positive regulation of photosynthesis gene expression in response to anaerobiosis. Also involved in positive regulation of the cbbI and cbbII Calvin cycle CO2 fixation operons, as well as in regulation of expression of genes involved in alternative CO2 fixation pathways. Phosphorylates RegA/PrrA. This chain is Sensor histidine kinase RegB (regB), found in Cereibacter sphaeroides (strain ATCC 17023 / DSM 158 / JCM 6121 / CCUG 31486 / LMG 2827 / NBRC 12203 / NCIMB 8253 / ATH 2.4.1.) (Rhodobacter sphaeroides).